Consider the following 61-residue polypeptide: Beta-insect depressant toxin BaIT2 (61 aa).

The 61-residue stretch at 1-61 (DGYIRRRDGC…TWKSETNTCG (61 aa)) folds into the LCN-type CS-alpha/beta domain. Disulfide bonds link cysteine 10/cysteine 60, cysteine 14/cysteine 35, cysteine 21/cysteine 42, and cysteine 25/cysteine 44.

Belongs to the long (4 C-C) scorpion toxin superfamily. Sodium channel inhibitor family. Beta subfamily. In terms of tissue distribution, expressed by the venom gland.

It localises to the secreted. Its function is as follows. Depressant insect beta-toxins cause a transient contraction paralysis followed by a slow flaccid paralysis. They bind voltage-independently at site-4 of sodium channels (Nav) and shift the voltage of activation toward more negative potentials thereby affecting sodium channel activation and promoting spontaneous and repetitive firing. This toxin is active only on insects. This is Beta-insect depressant toxin BaIT2 from Buthacus arenicola (North African scorpion).